The following is a 343-amino-acid chain: 7-epi-alpha-eudesmol synthase ((2E,6E)-farnesyl diphosphate cyclizing) (343 aa).

Mg(2+) is bound by residues D80 and D84. The short motif at 80-84 (DDQFD) is the DDXXD motif element. A substrate-binding site is contributed by R177. N223 and S227 together coordinate Mg(2+). R230 lines the substrate pocket. Mg(2+) is bound at residue E231. Position 317-318 (317-318 (RY)) interacts with substrate.

Belongs to the terpene synthase family. Mg(2+) is required as a cofactor.

It carries out the reaction (2E,6E)-farnesyl diphosphate + H2O = 7-epi-alpha-eudesmol + diphosphate. It functions in the pathway secondary metabolite biosynthesis; terpenoid biosynthesis. Catalyzes the conversion of (2E,6E)-farnesyl diphosphate (FPP) to yield the bicyclic sesquiterpenol 7-epi-alpha-eudesmol via a 1,10-cyclization, which requires the abstraction of the pyrophosphate from FPP to yield the (E,E)-germacradienyl cation. The only accepted substrate is (2E,6E)-farnesyl diphosphate (FPP). The protein is 7-epi-alpha-eudesmol synthase ((2E,6E)-farnesyl diphosphate cyclizing) of Streptomyces viridochromogenes (strain DSM 40736 / JCM 4977 / BCRC 1201 / Tue 494).